The following is a 645-amino-acid chain: Acetyl-coenzyme A synthetase 2 (645 aa).

CoA contacts are provided by residues 190-193, threonine 308, and asparagine 332; that span reads RGGK. Residues 384 to 386, 408 to 413, aspartate 497, and arginine 512 each bind ATP; these read GEP and DTWWQT. Serine 520 lines the CoA pocket. Arginine 523 contacts ATP. Residues valine 534, histidine 536, and valine 539 each contribute to the Mg(2+) site. The residue at position 606 (lysine 606) is an N6-acetyllysine.

It belongs to the ATP-dependent AMP-binding enzyme family. It depends on Mg(2+) as a cofactor. In terms of processing, acetylated. Deacetylation by the SIR2-homolog deacetylase activates the enzyme.

It catalyses the reaction acetate + ATP + CoA = acetyl-CoA + AMP + diphosphate. In terms of biological role, catalyzes the conversion of acetate into acetyl-CoA (AcCoA), an essential intermediate at the junction of anabolic and catabolic pathways. AcsA undergoes a two-step reaction. In the first half reaction, AcsA combines acetate with ATP to form acetyl-adenylate (AcAMP) intermediate. In the second half reaction, it can then transfer the acetyl group from AcAMP to the sulfhydryl group of CoA, forming the product AcCoA. The chain is Acetyl-coenzyme A synthetase 2 from Pseudomonas aeruginosa (strain ATCC 15692 / DSM 22644 / CIP 104116 / JCM 14847 / LMG 12228 / 1C / PRS 101 / PAO1).